Consider the following 429-residue polypeptide: 3-phosphoshikimate 1-carboxyvinyltransferase (429 aa).

Residues Lys11, Ser12, and Arg16 each coordinate 3-phosphoshikimate. Lys11 serves as a coordination point for phosphoenolpyruvate. Gly82 and Arg110 together coordinate phosphoenolpyruvate. 3-phosphoshikimate is bound by residues Ser155, Gln157, Asp302, and Lys329. Gln157 contributes to the phosphoenolpyruvate binding site. The active-site Proton acceptor is the Asp302. Residues Arg333 and Arg385 each coordinate phosphoenolpyruvate.

It belongs to the EPSP synthase family. Monomer.

It is found in the cytoplasm. The catalysed reaction is 3-phosphoshikimate + phosphoenolpyruvate = 5-O-(1-carboxyvinyl)-3-phosphoshikimate + phosphate. The protein operates within metabolic intermediate biosynthesis; chorismate biosynthesis; chorismate from D-erythrose 4-phosphate and phosphoenolpyruvate: step 6/7. Functionally, catalyzes the transfer of the enolpyruvyl moiety of phosphoenolpyruvate (PEP) to the 5-hydroxyl of shikimate-3-phosphate (S3P) to produce enolpyruvyl shikimate-3-phosphate and inorganic phosphate. This chain is 3-phosphoshikimate 1-carboxyvinyltransferase, found in Helicobacter pylori (strain J99 / ATCC 700824) (Campylobacter pylori J99).